The primary structure comprises 377 residues: Putative holocytochrome-c synthase (377 aa).

Disordered regions lie at residues 1 to 29 and 111 to 136; these read MTSSETTTDHPRTGKCPIDHSKFARSNEA and QNSEATPAVQPPATCPMSNSNQKPAG. Positions 7–22 are enriched in basic and acidic residues; the sequence is TTDHPRTGKCPIDHSK. HRM repeat units follow at residues 114–119 and 124–129; these read EATPAV and TCPMSN.

It belongs to the cytochrome c-type heme lyase family.

It is found in the mitochondrion inner membrane. Its subcellular location is the mitochondrion intermembrane space. The enzyme catalyses holo-[cytochrome c] = apo-[cytochrome c] + heme b. Functionally, lyase that catalyzes the covalent linking of the heme group to the cytochrome C apoprotein to produce the mature functional cytochrome. The chain is Putative holocytochrome-c synthase from Schizosaccharomyces pombe (strain 972 / ATCC 24843) (Fission yeast).